We begin with the raw amino-acid sequence, 324 residues long: RING-H2 finger protein ATL3 (324 aa).

Residues 24-44 (IILTAIIVLFMAVLFVLILHL) traverse the membrane as a helical segment. Residues 127 to 169 (CSICLSELVKGDKARLLPKCNHSFHVECIDMWFQSHSTCPICR) form an RING-type; atypical zinc finger. 3 disordered regions span residues 179–210 (SSKR…STSS), 226–248 (VSTG…ASQS), and 299–324 (RDKR…SVDP). Polar residues-rich tracts occupy residues 192–210 (NAGT…STSS) and 226–235 (VSTGNTNVGT). A compositionally biased stretch (low complexity) spans 306–324 (SNSSTSNSSSSNAVASVDP).

It belongs to the RING-type zinc finger family. ATL subfamily.

It localises to the membrane. The catalysed reaction is S-ubiquitinyl-[E2 ubiquitin-conjugating enzyme]-L-cysteine + [acceptor protein]-L-lysine = [E2 ubiquitin-conjugating enzyme]-L-cysteine + N(6)-ubiquitinyl-[acceptor protein]-L-lysine.. It participates in protein modification; protein ubiquitination. The polypeptide is RING-H2 finger protein ATL3 (ATL3) (Arabidopsis thaliana (Mouse-ear cress)).